The following is a 381-amino-acid chain: Selenoprotein P (381 aa).

An N-terminal signal peptide occupies residues 1–19 (MWRSLGLALALCLLPSGGT). N-linked (GlcNAc...) asparagine glycosylation is present at asparagine 46. Selenocysteine 59 is a non-standard amino acid (selenocysteine). Asparagine 83 carries an N-linked (GlcNAc...) (complex) asparagine glycan. N-linked (GlcNAc...) asparagine glycans are attached at residues asparagine 119, asparagine 128, and asparagine 174. The interval 200 to 268 (TPSPHYHHEH…ENRDMPASED (69 aa)) is disordered. The span at 204–216 (HYHHEHHHNHGHQ) shows a compositional bias: basic residues. The span at 218 to 230 (LGSSELSENQQPG) shows a compositional bias: polar residues. Positions 243–255 (LHHHHKHKGQHRQ) are enriched in basic residues. Residue serine 266 is modified to Phosphoserine. 3 non-standard amino acids (selenocysteine) are found at residues selenocysteine 300, selenocysteine 318, and selenocysteine 330. Asparagine 338 carries N-linked (GlcNAc...) asparagine glycosylation. 6 non-standard amino acids (selenocysteine) are found at residues selenocysteine 345, selenocysteine 352, selenocysteine 367, selenocysteine 369, selenocysteine 376, and selenocysteine 378. Residues 355–381 (SQQLIPTEASASURUKNQAKKUEUPSN) form a disordered region.

Belongs to the selenoprotein P family. In terms of processing, phosphorylation sites are present in the extracellular medium. In terms of tissue distribution, made in the liver and heart and secreted into the plasma. It is also found in the kidney.

It localises to the secreted. Its function is as follows. Might be responsible for some of the extracellular antioxidant defense properties of selenium or might be involved in the transport of selenium. May supply selenium to tissues such as brain and testis. The sequence is that of Selenoprotein P from Homo sapiens (Human).